The chain runs to 376 residues: Carbapenem antibiotics biosynthesis protein CarD (376 aa).

Belongs to the proline oxidase family.

Its pathway is antibiotic biosynthesis; carbapenem biosynthesis. This is Carbapenem antibiotics biosynthesis protein CarD (carD) from Pectobacterium carotovorum subsp. carotovorum (Erwinia carotovora subsp. carotovora).